The sequence spans 158 residues: Ecotin-like protein 2 (158 aa).

This sequence belongs to the protease inhibitor I11 (ecotin) family.

This chain is Ecotin-like protein 2, found in Leishmania major.